A 99-amino-acid polypeptide reads, in one-letter code: Prostate and testis expressed protein 4 (99 aa).

Positions 1–23 (MNSVTKISTLLIVILSFLCFVEG) are cleaved as a signal peptide. One can recognise a UPAR/Ly6 domain in the interval 24–99 (LICNSCEKSR…CCEKNLCNSF (76 aa)). Intrachain disulfides connect cysteine 26–cysteine 52, cysteine 29–cysteine 37, cysteine 44–cysteine 70, and cysteine 74–cysteine 90.

In terms of tissue distribution, expressed in prostate, testis, eye, kidney and skeletal muscle. Expressed in the dorsal lobe of prostate. Not expressed in the ventral lobe of prostate.

The protein localises to the secreted. Its function is as follows. Enhances sperm motility. Binds to calmodulin and inhibits calcium transport into spermatozoa. May modulate the function of nicotinic acetylcholine receptors. In Mus musculus (Mouse), this protein is Prostate and testis expressed protein 4 (Pate4).